The chain runs to 349 residues: N-acetyltaurine hydrolase (349 aa).

Residues H26, H28, E169, H201, H230, and D298 each coordinate a divalent metal cation.

It belongs to the metallo-dependent hydrolases superfamily. Phosphotriesterase family. The cofactor is a divalent metal cation. Expressed primarily in proximal tubules of the kidney.

It localises to the cytoplasm. The protein resides in the cytosol. It catalyses the reaction N-acetyltaurine + H2O = taurine + acetate. It carries out the reaction N-propanoyltaurine + H2O = propanoate + taurine. The enzyme catalyses N-acetyl-L-methionine + H2O = L-methionine + acetate. The catalysed reaction is N-acetyl-L-isoleucine + H2O = L-isoleucine + acetate. It catalyses the reaction N-acetyl-L-leucine + H2O = L-leucine + acetate. It carries out the reaction N-acetyl-L-valine + H2O = L-valine + acetate. In terms of biological role, N-acetyltaurine hydrolase that regulates feeding by catalyzing the hydrolysis of N-acetyltaurine into taurine and acetate. N-acetyltaurine has anorexigenic and anti-obesity effects that are dependent on GFRAL receptor and GDF15. PTER also acts on other N-acetyl amino acids (Met, Ile, Leu, Val) and N-propionyltaurine, but at lower rates. Binds resiniferotoxin, a vanilloid that desensitizes nociceptive neurons. The chain is N-acetyltaurine hydrolase from Rattus norvegicus (Rat).